The chain runs to 61 residues: Sperm protamine P1 (61 aa).

The segment at 1–61 is disordered; it reads MARYRHSRSR…RYSRRRRRRY (61 aa).

Belongs to the protamine P1 family. Testis.

The protein localises to the nucleus. The protein resides in the chromosome. Its function is as follows. Protamines substitute for histones in the chromatin of sperm during the haploid phase of spermatogenesis. They compact sperm DNA into a highly condensed, stable and inactive complex. The sequence is that of Sperm protamine P1 (PRM1) from Setonix brachyurus (Quokka).